A 69-amino-acid polypeptide reads, in one-letter code: Neurotoxin Cex5 (69 aa).

Residue A1 is a signal peptide. Residues 2–67 (KDGYLVSKST…TYPIPGKSCG (66 aa)) form the LCN-type CS-alpha/beta domain. 4 disulfides stabilise this stretch: C13/C66, C17/C42, C26/C47, and C30/C49. Residue C66 is modified to Cysteine amide. A propeptide spanning residues 67-69 (GKK) is cleaved from the precursor.

Belongs to the long (4 C-C) scorpion toxin superfamily. Sodium channel inhibitor family. Beta subfamily. Expressed by the venom gland.

It localises to the secreted. Functionally, beta toxins bind voltage-independently at site-4 of sodium channels (Nav) and shift the voltage of activation toward more negative potentials thereby affecting sodium channel activation and promoting spontaneous and repetitive firing. This chain is Neurotoxin Cex5, found in Centruroides exilicauda (Bark scorpion).